A 329-amino-acid chain; its full sequence is GMP reductase (329 aa).

Cysteine 178 (thioimidate intermediate) is an active-site residue. 207-230 provides a ligand contact to NADP(+); sequence VIADGGIRTHGDIAKSIRMGATMV.

It belongs to the IMPDH/GMPR family. GuaC type 2 subfamily.

It catalyses the reaction IMP + NH4(+) + NADP(+) = GMP + NADPH + 2 H(+). In terms of biological role, catalyzes the irreversible NADPH-dependent deamination of GMP to IMP. It functions in the conversion of nucleobase, nucleoside and nucleotide derivatives of G to A nucleotides, and in maintaining the intracellular balance of A and G nucleotides. The polypeptide is GMP reductase (Lactococcus lactis subsp. cremoris (strain SK11)).